The chain runs to 863 residues: Potassium/sodium hyperpolarization-activated cyclic nucleotide-gated channel 2 (863 aa).

The segment covering 1 to 10 has biased composition (gly residues); sequence MDARGGGGRP. The interval 1–131 is disordered; the sequence is MDARGGGGRP…AGPAGEPRGS (131 aa). At 1–188 the chain is on the cytoplasmic side; that stretch reads MDARGGGGRP…PYSDFRFYWD (188 aa). Residues 17-47 show a composition bias toward pro residues; that stretch reads TPAPGPPPPPPPPAPPQPQPPPAPPPNPTTP. The span at 106 to 128 shows a compositional bias: low complexity; sequence GAASGPAAAEEAGSEEAGPAGEP. A phosphoserine mark is found at serine 119 and serine 134. The segment at 131-182 is involved in subunit assembly; that stretch reads SQASFLQRQFGALLQPGVNKFSLRMFGSQKAVEREQERVKSAGAWIIHPYSD. Residues 189 to 209 form a helical membrane-spanning segment; sequence FTMLLFMVGNLIIIPVGITFF. Over 210-213 the chain is Extracellular; sequence KDET. A helical membrane pass occupies residues 214-234; the sequence is TAPWIVFNVVSDTFFLMDLVL. At 235–261 the chain is on the cytoplasmic side; sequence NFRTGIVIEDNTEIILDPEKIKKKYLR. A helical membrane pass occupies residues 262 to 282; the sequence is TWFVVDFVSSIPVDYIFLIVE. Topologically, residues 283–290 are extracellular; that stretch reads KGIDSEVY. A helical; Voltage-sensor transmembrane segment spans residues 291–311; that stretch reads KTARALRIVRFTKILSLLRLL. The Cytoplasmic segment spans residues 312 to 342; the sequence is RLSRLIRYIHQWEEIFHMTYDLASAVMRICN. Residues 343–363 traverse the membrane as a helical segment; it reads LISMMLLLCHWDGCLQFLVPM. Residues 364 to 386 lie on the Extracellular side of the membrane; it reads LQDFPSDCWVSINNMVNHSWSEL. N-linked (GlcNAc...) asparagine glycosylation is present at asparagine 380. Residues 387–408 constitute an intramembrane region (pore-forming); sequence YSFALFKAMSHMLCIGYGRQAP. At 409–413 the chain is on the extracellular side; it reads ESMTD. Residues 414–434 traverse the membrane as a helical segment; the sequence is IWLTMLSMIVGATCYAMFIGH. Over 435-863 the chain is Cytoplasmic; sequence ATALIQSLDS…SARSRLSSNL (429 aa). Residues glycine 581, glutamate 582, cysteine 584, arginine 591, threonine 592, and arginine 632 each coordinate 3',5'-cyclic AMP. At serine 641 the chain carries Phosphoserine; by PKG/PRKG2. The residue at position 726 (serine 726) is a Phosphoserine. Position 728 is an omega-N-methylarginine (arginine 728). The interval 730–863 is disordered; it reads VRRAPPGPLP…SARSRLSSNL (134 aa). Pro residues predominate over residues 734 to 755; sequence PPGPLPPAASPGPPAASPPAAP. Serine 743, serine 750, and serine 757 each carry phosphoserine. Low complexity-rich tracts occupy residues 756-765 and 778-834; these read SSPRAPRTSP and PALP…AAPS. 3 positions are modified to phosphoserine: serine 840, serine 842, and serine 847.

Belongs to the potassium channel HCN family. Homotetramer. The channel is composed of a homo- or heterotetrameric complex of pore-forming subunits. Heterotetramer with HCN1. Forms an obligate 4:4 complex with accessory subunit PEX5L. Interacts with KCNE2. In terms of processing, phosphorylation at Ser-641 by PRKG2 shifts the voltage-dependence to more negative voltages, hence counteracting the stimulatory effect of cGMP on gating. Post-translationally, N-glycosylated; required for cell surface trafficking of HCN2. S-palmitoylated. Highly expressed in neonatal and adult ventricle and in brain. Highly expressed in the pyramidal layer in hippocampus, in anterior dorsal nucleus in thalamus, in the mammillary nucleus in hypothalamus, in red nucleus, in trigeminal mesencephalic, spinal and principal nuclei, in cochlear and trapezoid nuclei and in the dorsal tegemental nucleus.

The protein localises to the cell membrane. It carries out the reaction Na(+)(in) = Na(+)(out). It catalyses the reaction K(+)(in) = K(+)(out). The enzyme catalyses NH4(+)(in) = NH4(+)(out). With respect to regulation, activated by cAMP, and at 10-100 times higher concentrations, also by cGMP. cAMP binding causes a conformation change that leads to the assembly of an active tetramer and channel opening. In the absence of cAMP, the C-terminal region is thought to exert a tonic inhibition on the pore when HCN2 is in a non-tetrameric form. Channel activity is modulated by intracellular chloride ions and pH; acidic pH shifts the activation to more negative voltages. Phosphatidylinositol-4,5- bisphosphate (PIP(2)) acts as a ligand that allosterically opens HCN2 by shifting voltage-dependent channel activation toward depolarized potentials. Inhibited by extracellular cesium ions. In terms of biological role, hyperpolarization-activated ion channel exhibiting weak selectivity for potassium over sodium ions. Contributes to the native pacemaker currents in heart (If) and in neurons (Ih). Can also transport ammonium in the distal nephron. Involved in the initiation of neuropathic pain in sensory neurons. Produces a large instantaneous current. This chain is Potassium/sodium hyperpolarization-activated cyclic nucleotide-gated channel 2 (Hcn2), found in Rattus norvegicus (Rat).